Consider the following 1545-residue polypeptide: MLCIRPEALVLLGALLTVPLDPVGGQDALSLTWEVQRYDGWFNNLRQHEHGAAGSPLRRLVPANYADGVYQALGEPLLPNPRQLSHTTMRGPAGLRSIRNRTVLGVFFGYHVLSDLVSIEKPGCPAEFLNIHIPPGDPVFDPHKSGDVVLPFQRSRWDPNTGQSPSNPRDLTNEVTGWLDGSAIYGSSHSWSDELRSFSGGQLASGPDPAFPRQAQDPLFMWTPPDPATGQRGPQGLYAFGAEQGNREPFLQALGLLWFRYHNLCAQKLAREHPLWGDEELFQHARKRVIATYQSITMYEWLPSFLQQTPPNYTEYRPFLDPSISPEFLAASEQFFSTMVPPGVYMRNASCHFQMVLNESYGSFPALRVCNSYWIRENPNLNSAEAVNQLLLGMASQISELEDWIVVEDLRDYWPGPGKFSRTDYVASSIQRGRDMGLPSYTQALQALGLNTPKNWSDFNPNVDPQVLEATAALYNQDLSRLELFSGGLLESYGDPGPLFSTIVLDQFVRLRDGDRYWFENTKNGLFSKEEIAEIRSTTLRDVLVAVTNVSSSALQPNVFIWNEDSPCPQPQQLTTEDLPHCVPLTVIQYFEGSGPGFGITIVALCCLPLMSLLISGVVAYFRSRERKKLQKRGKESVKKEADKDGVSAMEWPGPKERSYPVSIQLLPDRHLQVLDRHLSVLRTIQLRPRHRVNLILSNNLGRRTLLLKIPKEYDLVLLFNSEDERGAFVQHLQGFCASCALGLDIDEMGESELFRKAVTKQQRGRILEIFFRHLFAQVLDIDQADAGALPLDSSQKVREALTCELSRAEFAESLGLKPQDMFVESMFSLADKDGNGYLSFREFLDVLVVFMKGSPEDKSRLMFTMYDLDGNGFLSKDEFFTMIRSFIEISNNCLSKAQLTEVVESMFREAGFQDKQELTWEDFHFMLRDHDSELRHTQLCVKGGGGGVGVIFKPDISSRVSFIIRTPEERSSPQGVRLPASEASELGGPVLKKRFGKKAVVPPPRLYTEALQEKKQRGFLAQKLQQYKRFVENYRRHIVCVAIFSAICAGLFVERAYYYAFVSPPSGIAETTFVGIILSRGTAASVSFMFSYILLTMCRNLITFLRETFLNHYVPFDAAVDFHRWIAMAALVLAILHSVGHVVNVYIFSVSPLSLLACVFPSVFVNDGSKLPQKFYWWFFQTIPGMTGVLLLVVLAIMYVFASPYFRRRSFRGFWLTHHFYILLYVLLIIHGSFALIQLPRFHIFFLVPALIYVGDKLVSLSRKKVEISVVKAELLPSGVTHLQFQRPQGFEYKSGQWVRIACLGLGTNEYHPFTLTSAPHEDTLSLHIRAVGPWTTRLREIYSHPMGDGYARYPKLYLDGPFGEGHQEWHKFEVSVLVGGGIGVTPFASILKDLVFKSSLGSQMLCKKIYFIWVTRTQRQFEWLADIIREVEENDHRDLVSVHIYITQLAEKFDLRTTMLYICERHFQKVLNRSLFTGLRSITHFGRPPFEPFFNSLQEVHPQVRKIGVFSCGPPGMTKNVEKTCQLINRQDQTHFVHHYENF.

Residues 1-25 (MLCIRPEALVLLGALLTVPLDPVGG) form the signal peptide. The Extracellular portion of the chain corresponds to 26–601 (QDALSLTWEV…EGSGPGFGIT (576 aa)). The segment at 30–596 (SLTWEVQRYD…VIQYFEGSGP (567 aa)) is peroxidase-like; mediates peroxidase activity. N-linked (GlcNAc...) asparagine glycans are attached at residues asparagine 100, asparagine 312, asparagine 348, asparagine 358, asparagine 455, and asparagine 549. An intrachain disulfide couples cysteine 124 to cysteine 1159. Residues 602–622 (IVALCCLPLMSLLISGVVAYF) form a helical membrane-spanning segment. The Cytoplasmic portion of the chain corresponds to 623–1037 (RSRERKKLQK…YKRFVENYRR (415 aa)). EF-hand domains follow at residues 819-854 (PQDMFVESMFSLADKDGNGYLSFREFLDVLVVFMKG), 855-890 (SPEDKSRLMFTMYDLDGNGFLSKDEFFTMIRSFIEI), and 899-934 (QLTEVVESMFREAGFQDKQELTWEDFHFMLRDHDSE). Positions 832, 834, 836, 838, 843, 868, 870, 872, and 879 each coordinate Ca(2+). The interaction with TXNDC11 stretch occupies residues 960 to 1242 (RVSFIIRTPE…GSFALIQLPR (283 aa)). A helical membrane pass occupies residues 1038–1058 (HIVCVAIFSAICAGLFVERAY). Residues 1059-1074 (YYAFVSPPSGIAETTF) are Extracellular-facing. A helical membrane pass occupies residues 1075–1097 (VGIILSRGTAASVSFMFSYILLT). Residues 1081 to 1263 (RGTAASVSFM…YVGDKLVSLS (183 aa)) form the Ferric oxidoreductase domain. The Cytoplasmic segment spans residues 1098-1125 (MCRNLITFLRETFLNHYVPFDAAVDFHR). A helical transmembrane segment spans residues 1126–1148 (WIAMAALVLAILHSVGHVVNVYI). The Extracellular portion of the chain corresponds to 1149 to 1182 (FSVSPLSLLACVFPSVFVNDGSKLPQKFYWWFFQ). The chain crosses the membrane as a helical span at residues 1183 to 1203 (TIPGMTGVLLLVVLAIMYVFA). Residues 1204–1220 (SPYFRRRSFRGFWLTHH) lie on the Cytoplasmic side of the membrane. Residues 1221–1241 (FYILLYVLLIIHGSFALIQLP) traverse the membrane as a helical segment. Position 1242 (arginine 1242) is a topological domain, extracellular. Residues 1243-1263 (FHIFFLVPALIYVGDKLVSLS) traverse the membrane as a helical segment. Residues 1264–1370 (RKKVEISVVK…DGPFGEGHQE (107 aa)) enclose the FAD-binding FR-type domain. The Cytoplasmic segment spans residues 1264-1545 (RKKVEISVVK…THFVHHYENF (282 aa)).

This sequence in the N-terminal section; belongs to the peroxidase family. In terms of assembly, heterodimer with DUOXA2; disulfide-linked. Interacts with TXNDC11, TPO and CYBA. Post-translationally, N-glycosylated. In terms of tissue distribution, expressed in thyroid, and the digestive tract especially in stomach, cecum and sigmoidal colon (at protein level). Expressed in thyroid.

It localises to the apical cell membrane. It is found in the cell junction. The enzyme catalyses NADH + O2 + H(+) = H2O2 + NAD(+). It catalyses the reaction NADPH + O2 + H(+) = H2O2 + NADP(+). The protein operates within hormone biosynthesis; thyroid hormone biosynthesis. Its activity is regulated as follows. The NADPH oxidase activity is calcium-dependent. Peroxidase activity is inhibited by aminobenzohydrazide. In terms of biological role, generates hydrogen peroxide which is required for the activity of thyroid peroxidase/TPO and lactoperoxidase/LPO. Plays a role in thyroid hormones synthesis and lactoperoxidase-mediated antimicrobial defense at the surface of mucosa. May have its own peroxidase activity through its N-terminal peroxidase-like domain. This Sus scrofa (Pig) protein is Dual oxidase 2 (DUOX2).